The following is a 430-amino-acid chain: Gamma-glutamyl phosphate reductase (430 aa).

It belongs to the gamma-glutamyl phosphate reductase family.

Its subcellular location is the cytoplasm. It catalyses the reaction L-glutamate 5-semialdehyde + phosphate + NADP(+) = L-glutamyl 5-phosphate + NADPH + H(+). Its pathway is amino-acid biosynthesis; L-proline biosynthesis; L-glutamate 5-semialdehyde from L-glutamate: step 2/2. Catalyzes the NADPH-dependent reduction of L-glutamate 5-phosphate into L-glutamate 5-semialdehyde and phosphate. The product spontaneously undergoes cyclization to form 1-pyrroline-5-carboxylate. The chain is Gamma-glutamyl phosphate reductase from Rhodopseudomonas palustris (strain BisA53).